Reading from the N-terminus, the 225-residue chain is Ribonuclease HII (225 aa).

The region spanning G35 to D225 is the RNase H type-2 domain. The a divalent metal cation site is built by D41, E42, and D137.

This sequence belongs to the RNase HII family. The cofactor is Mn(2+). Requires Mg(2+) as cofactor.

Its subcellular location is the cytoplasm. It carries out the reaction Endonucleolytic cleavage to 5'-phosphomonoester.. Its function is as follows. Endonuclease that specifically degrades the RNA of RNA-DNA hybrids. The protein is Ribonuclease HII of Nostoc sp. (strain PCC 7120 / SAG 25.82 / UTEX 2576).